A 200-amino-acid chain; its full sequence is Protein GrpE (200 aa).

The span at 1–11 (MSNQTNKAQDN) shows a compositional bias: polar residues. Positions 1–25 (MSNQTNKAQDNQVEEIVEGELLNEN) are disordered.

The protein belongs to the GrpE family. In terms of assembly, homodimer.

The protein resides in the cytoplasm. Functionally, participates actively in the response to hyperosmotic and heat shock by preventing the aggregation of stress-denatured proteins, in association with DnaK and GrpE. It is the nucleotide exchange factor for DnaK and may function as a thermosensor. Unfolded proteins bind initially to DnaJ; upon interaction with the DnaJ-bound protein, DnaK hydrolyzes its bound ATP, resulting in the formation of a stable complex. GrpE releases ADP from DnaK; ATP binding to DnaK triggers the release of the substrate protein, thus completing the reaction cycle. Several rounds of ATP-dependent interactions between DnaJ, DnaK and GrpE are required for fully efficient folding. This is Protein GrpE from Shewanella pealeana (strain ATCC 700345 / ANG-SQ1).